We begin with the raw amino-acid sequence, 131 residues long: Large ribosomal subunit protein eL32 (131 aa).

It belongs to the eukaryotic ribosomal protein eL32 family.

This is Large ribosomal subunit protein eL32 (RPL32) from Candida glabrata (strain ATCC 2001 / BCRC 20586 / JCM 3761 / NBRC 0622 / NRRL Y-65 / CBS 138) (Yeast).